The sequence spans 1153 residues: MSLRFIYGRAGSGKSQFCIESINTRIEKGGDKPLILIVPEQFSFQSEKNILDLIGEKSINRVKVISFKRLAYRIFDEVGGIAREHMNSSGKSMLFYHIMNTLKSEFRVFALSARQKGFVNTIADTVSEFKKYELTTEVLRDTIDEIEDEELKNKLHDLSLIYDEFNRLLYKNYIDPDDDLTILKDKIKQSTVLQGAEIWLDEFSSFIPQQYGIIEELLKKCSRVNITLTMDYDNASKDNDIFSVTQNTEKRLLKLAENNNISIEKPINLNGRPFYRFKNSPELSFLEKNLYSFPYEIYKKGPDKIEIFKTSNLYTEVEKIARNIIEFVREDNVRFSDIAVVTGDLGSYEKTVSVIFKEYRIPFFIDRNKDIEDNTLIILIKSIIDIFVKNWSYETVFRYLKTGFADIEPDEIDILENYVLAAGIKGKKKWTEEEWTYNVYGDALEGDISEESKEKLSKVNEIKNRFLRPILNFRERVLRRNNVAEICRALFEFLYDINVPEAVEKMVNEFRESGRQILANEYSQIWNIIIELMDQLVEVMGNEKVNLEQFSRILFIGIKEHKMGLIPSSLDQVLVGSIDRLKSHAIKILYIIGVNDGVFPSAAMEEGILSDRDREILNSKGVELAKDTKTQAMEQRFLVYTAITNSKEYLFLSYPIADYEGKTLRPSLIVNRVKTLFPKIVEKSDVIKIENDEESMKLISATVPTFNEMISSFRKEIDGEGEVSSIWHDVYRWYSKSDEWTGKCNNMFKAISYTNQVDYISEEKALKLYGGSLKMSVSRLEKYIECPFSYYVQYGLNIKDRKIFSLTPPDLGSFMHKVIDRFCETIKEENIDWNEVNDHICEEKIYKIVDQEIEGRGGSILNSSPRYSYIALRLKRILKRTVRIVAEQFKRGSFKPVGYEVSFENGGSYPPITVGLNDGSEVVLTGRIDRIDMMEKDGSTYIRIVDYKSGNKIFKLSDVYYGFDIQLLLYLNAILENENLDEEDKVLPGAILYFTMDDPIIKGKNNLTDEQIREEIMKSLKMKGLLLSDPDVIKEMDREMEGSSIIIPASIKKDGTLGRSSAATKEQFDILIEHVRNLVVKNCENLLMGDIRIKPYKKGKEKPCDYCMYSSICRFDTMFDGNNYRYVKEKSDEEVWKLIEREMSEEGDERGED.

An ATP-binding site is contributed by 8–15; the sequence is GRAGSGKS. Positions 786, 1104, 1107, and 1113 each coordinate [4Fe-4S] cluster.

It belongs to the helicase family. AddB/RexB type 1 subfamily. In terms of assembly, heterodimer of AddA and AddB. Mg(2+) is required as a cofactor. The cofactor is [4Fe-4S] cluster.

In terms of biological role, the heterodimer acts as both an ATP-dependent DNA helicase and an ATP-dependent, dual-direction single-stranded exonuclease. Recognizes the chi site generating a DNA molecule suitable for the initiation of homologous recombination. The AddB subunit has 5' -&gt; 3' nuclease activity but not helicase activity. This is ATP-dependent helicase/deoxyribonuclease subunit B from Clostridium acetobutylicum (strain ATCC 824 / DSM 792 / JCM 1419 / IAM 19013 / LMG 5710 / NBRC 13948 / NRRL B-527 / VKM B-1787 / 2291 / W).